A 111-amino-acid chain; its full sequence is uncharacterized protein (111 aa).

A coiled-coil region spans residues 3–29; it reads RKITSYKTSLQGLREENEDVELMNLNL. In terms of domain architecture, PPM-type phosphatase spans 6 to 111; that stretch reads TSYKTSLQGL…TWWMYCSSYY (106 aa).

This is an uncharacterized protein from Acanthamoeba polyphaga mimivirus (APMV).